A 347-amino-acid polypeptide reads, in one-letter code: Adenine deaminase (347 aa).

Residues histidine 16, histidine 18, and histidine 204 each coordinate Zn(2+). Glutamate 207 acts as the Proton donor in catalysis. Zn(2+) is bound at residue aspartate 285. Position 286 (aspartate 286) interacts with substrate.

The protein belongs to the metallo-dependent hydrolases superfamily. Adenosine and AMP deaminases family. Adenine deaminase type 2 subfamily. The cofactor is Zn(2+). Post-translationally, probably ubiquitinated when cells enter quiescence in response to nutrient limitation, since it is specifically degraded via a process requiring the F-box protein SAF1 and components of the SKP1-Cullin-F-box complex.

It is found in the cytoplasm. The protein localises to the nucleus. The enzyme catalyses adenine + H2O + H(+) = hypoxanthine + NH4(+). Its function is as follows. Catalyzes the hydrolytic deamination of adenine to hypoxanthine. Plays an important role in the purine salvage pathway and in nitrogen catabolism. Also exhibits a low activity towards N(6)-substituted adenines that are commonly known as the plant hormones cytokinins. This chain is Adenine deaminase, found in Saccharomyces cerevisiae (strain ATCC 204508 / S288c) (Baker's yeast).